The sequence spans 157 residues: Protein Smg (157 aa).

It belongs to the Smg family.

This Escherichia coli O139:H28 (strain E24377A / ETEC) protein is Protein Smg.